The primary structure comprises 1338 residues: Fanconi anemia group I protein (1338 aa).

K525 participates in a covalent cross-link: Glycyl lysine isopeptide (Lys-Gly) (interchain with G-Cter in ubiquitin). Phosphoserine is present on residues S558 and S561. The residue at position 567 (T567) is a Phosphothreonine.

Belongs to the Fanconi anemia group I protein family. As to quaternary structure, homodimer. Part of a FANCI-FANCD2 heterodimeric complex that binds and scans dsDNA for DNA damage. Interacts with FANCL. Interacts with MTMR15/FAN1. Interacts with POLN. Interacts with UBL5; the interaction promotes FANCI homodimerization. Monoubiquitinated by FANCL during S phase and upon genotoxic stress. Deubiquitinated by USP1 as cells enter G2/M, or once DNA repair is completed. Monoubiquitination requires the FANCA-FANCB-FANCC-FANCE-FANCF-FANCG-FANCM complex. Ubiquitination is required for binding to chromatin, DNA repair, and normal cell cycle progression. Monoubiquitination is stimulated by DNA-binding. Post-translationally, phosphorylated in response to DNA damage by ATM and/or ATR. Phosphorylation of FANCI promotes ubiquitination of FANCD2, which prevents DNA release from the FANCI-FANCD2 complex.

Its function is as follows. Plays an essential role in the repair of DNA double-strand breaks by homologous recombination and in the repair of interstrand DNA cross-links (ICLs) by promoting FANCD2 monoubiquitination by FANCL and participating in recruitment to DNA repair sites. The FANCI-FANCD2 complex binds and scans double-stranded DNA (dsDNA) for DNA damage; this complex stalls at DNA junctions between double-stranded DNA and single-stranded DNA. Participates in S phase and G2 phase checkpoint activation upon DNA damage. In Gallus gallus (Chicken), this protein is Fanconi anemia group I protein.